The chain runs to 805 residues: Serine/threonine-protein kinase fused (805 aa).

In terms of domain architecture, Protein kinase spans 4 to 254 (YAVSSLVGQG…WTQLLCHPFV (251 aa)). Residues 10-18 (VGQGSFGCV) and Lys33 contribute to the ATP site. The Proton acceptor role is filled by Asp125. The disordered stretch occupies residues 269-289 (KESPFTNPEAKVKSSKQSDPE). Over residues 278–287 (AKVKSSKQSD) the composition is skewed to basic and acidic residues. 2 positions are modified to phosphoserine: Ser422 and Ser429. The segment covering 447–456 (IATQEKHNQE) has biased composition (basic and acidic residues). Residues 447–496 (IATQEKHNQENKPPAEAISYANSQPPQQQPQQLKHSMHSTNEEKLSSDNT) are disordered.

This sequence belongs to the protein kinase superfamily. Ser/Thr protein kinase family. As to expression, expressed in all imaginal disks, higher level in wing disk.

The enzyme catalyses L-seryl-[protein] + ATP = O-phospho-L-seryl-[protein] + ADP + H(+). It carries out the reaction L-threonyl-[protein] + ATP = O-phospho-L-threonyl-[protein] + ADP + H(+). Functionally, probable serine/threonine-protein kinase; maternally required for correct patterning in the posterior part of each embryonic metamere. May be involved in control of cell division during metamorphosis and ovarian development. May interact with costal-2. The polypeptide is Serine/threonine-protein kinase fused (fu) (Drosophila melanogaster (Fruit fly)).